We begin with the raw amino-acid sequence, 4998 residues long: SCO-spondin (4998 aa).

Positions 1–17 (MLPLALLFGMLWTQANG) are cleaved as a signal peptide. In terms of domain architecture, EMI spans 18–102 (HWCEQIETVH…ACCPGWGGAH (85 aa)). A VWFD 1 domain is found at 72-241 (GLCAIYKPPE…KLPGSEPGCL (170 aa)). 2 disulfide bridges follow: C74/C202 and C103/C240. N-linked (GlcNAc...) asparagine glycans are attached at residues N88 and N130. The 56-residue stretch at 349–404 (CPGGQLYSDCVSSCPPSCSAVAQGEEGSCGKECVSGCECPTGLFWDGALCVPAAHC) folds into the TIL 1 domain. In terms of domain architecture, VWFC 1 spans 404–496 (CPCYHRRQRY…HGACDTGSCL (93 aa)). Residues 442–615 (AECAVGGDGH…FQVSGDGRCP (174 aa)) enclose the VWFD 2 domain. 2 disulfides stabilise this stretch: C444–C577 and C468–C614. N534 and N698 each carry an N-linked (GlcNAc...) asparagine glycan. The TIL 2 domain occupies 706–759 (CPGGQVYQECAPVCGHHCGEPEDCKELGICVAGCNCPPGLLWDLEGQCVPPSMC). Residues N771, N790, N824, and N866 are each glycosylated (N-linked (GlcNAc...) asparagine). The VWFD 3 domain maps to 892–1062 (GWCQASGAPH…HSWRLNPLCP (171 aa)). 3 disulfides stabilise this stretch: C894–C1026, C916–C1061, and C937–C944. The 57-residue stretch at 1153–1209 (CEGGQVYEPCGSTCPPTCHDHHSELRWHCQVITCVEGCFCPEGTLLHGGACMKLAAC) folds into the TIL 3 domain. N-linked (GlcNAc...) asparagine glycosylation is present at N1230. 4 consecutive LDL-receptor class A domains span residues 1253 to 1290 (GCAEGETLCRENGHCVPLEWLCDNQDDCGDGSDEEGCA), 1293 to 1328 (VCGEGQMSCQSGHCLPLSLICDGQDDCGDGTDEQGC), 1329 to 1365 (LCPHGSLACADGRCLPPALLCNGHPDCLDAADEESCL), and 1369 to 1407 (SCISGEVSCVDGTCVRTIQLCDGVWDCPDGADEGPSHCS). Cystine bridges form between C1254-C1267, C1261-C1280, C1274-C1289, C1294-C1306, C1301-C1319, C1313-C1328, C1330-C1342, C1337-C1355, C1349-C1364, C1370-C1382, C1377-C1395, and C1389-C1406. The segment at 1406–1440 (CSLPSLPTPPGGIGQNPSTSSLDTAPSPVGSTSPA) is disordered. The segment covering 1420–1440 (QNPSTSSLDTAPSPVGSTSPA) has biased composition (polar residues). LDL-receptor class A domains are found at residues 1442–1478 (PCSLLEFQCNSGECTPRGWRCDQEEDCTDGSDELDCG) and 1480–1519 (PCMLYQVPCAHSPHCVSPGQLCDGVTQCPDGSDEDPDVCE). Intrachain disulfides connect C1443–C1455, C1450–C1468, C1462–C1477, C1481–C1494, C1488–C1507, and C1501–C1518. N1528 carries N-linked (GlcNAc...) asparagine glycosylation. Positions 1533–1571 (PCPEFSCPDGTCIDFLLVCDGNPDCELADETEPSLDEQG) constitute an LDL-receptor class A 7 domain. Intrachain disulfides connect C1534-C1544, C1539-C1557, C1551-C1572, C1584-C1620, C1588-C1625, C1599-C1610, C1640-C1680, C1644-C1685, and C1654-C1664. TSP type-1 domains lie at 1572-1626 (CGAW…EACP) and 1628-1686 (DGEW…EGCL). N-linked (GlcNAc...) asparagine glycosylation occurs at N1598. Residue N1687 is glycosylated (N-linked (GlcNAc...) asparagine). In terms of domain architecture, TIL 4 spans 1692 to 1746 (GELVFRTCAPCPLTCDDISGQAACPPDRPCSSPGCWCPDGKVLNTEGQCVRPRQC). EGF-like domains lie at 1702-1741 (CPLTCDDISGQAACPPDRPCSSPGCWCPDGKVLNTEGQCV) and 1742-1768 (RPRQCPCLVDGAHYWPGQRIKMDCQLC). Positions 1771-1827 (DCGWSSWSPWAECLGPCSSQSLQWSFRSPNNPRLSGHGRQCRGIHRKARRCQTEACE) constitute a TSP type-1 3 domain. 3 cysteine pairs are disulfide-bonded: C1772–C1811, C1783–C1787, and C1821–C1826. The VWFC 2 domain occupies 1827 to 1887 (EGCEQWGLMY…GMGESCCHCA (61 aa)). Residues N1892 and N1989 are each glycosylated (N-linked (GlcNAc...) asparagine). The F5/8 type C domain occupies 1929-2085 (CYSPLGLAGL…IFLWVELLGL (157 aa)). In terms of domain architecture, LDL-receptor class A 8 spans 2091 to 2127 (LCPGSRHRCASGECAPKGGPCDGAVDCDDGSDEEGCG). 3 disulfides stabilise this stretch: C2092/C2104, C2099/C2117, and C2111/C2126. The segment at 2119 to 2209 (DGSDEEGCGS…TFPPGAKSLH (91 aa)) is disordered. Residues 2130–2144 (HASTTSRTPALSPTQ) are compositionally biased toward polar residues. Basic and acidic residues predominate over residues 2148-2158 (FPREVSEDLRQ). Polar residues-rich tracts occupy residues 2164–2173 (TSHSPPSSGE) and 2190–2201 (QPMQTLSATSTF). 2 LDL-receptor class A domains span residues 2242-2278 (PCGPGQVPCDVLGCVEQEQLCDGREDCLDGSDEQHCA) and 2299-2335 (LCSPSQLRCGSGECLPFEHRCDLQVNCQDGSDEDNCV). 12 disulfide bridges follow: C2243–C2255, C2250–C2268, C2262–C2277, C2300–C2312, C2307–C2325, C2319–C2334, C2337–C2373, C2348–C2352, C2383–C2388, C2403–C2440, C2407–C2445, and C2418–C2430. 2 TSP type-1 domains span residues 2336–2389 (DCVL…QACP) and 2391–2446 (AGAW…QLCP). The 44-residue stretch at 2468–2511 (VPPCPPSCLDPEANRSCSGHCMEGCRCPPGLLLQDSHCLPLSEC) folds into the TIL 5 domain. N-linked (GlcNAc...) asparagine glycans are attached at residues N2481 and N2530. TSP type-1 domains are found at residues 2551–2605 (SCGW…TDCG), 2609–2664 (PGWT…PVCP), and 2666–2719 (PSAW…HPCT). 9 disulfides stabilise this stretch: C2552–C2590, C2563–C2567, C2600–C2604, C2620–C2658, C2624–C2663, C2640–C2648, C2678–C2713, C2682–C2718, and C2693–C2703. Residues N2772 and N2802 are each glycosylated (N-linked (GlcNAc...) asparagine). TSP type-1 domains are found at residues 2820–2875 (ACGW…RPCR) and 2876–2919 (GPGA…QPCA). Disulfide bonds link C2821/C2859, C2832/C2836, and C2869/C2874. Residues N2897, N2952, N2999, and N3009 are each glycosylated (N-linked (GlcNAc...) asparagine). One can recognise a TIL 6 domain in the interval 2926-2978 (CPEDQQWLDCAQGPASCAHLSIPGEANQTCHPGCYCLSGMLLLNNVCVPVQDC). TSP type-1 domains are found at residues 3019 to 3086 (QPAW…PGCN) and 3088 to 3143 (AGGW…QPCP). 6 cysteine pairs are disulfide-bonded: C3031–C3080, C3035–C3085, C3046–C3070, C3100–C3137, C3104–C3142, and C3115–C3127. N3146 carries N-linked (GlcNAc...) asparagine glycosylation. Residues 3151–3201 (EGAEYSPCGPPCPRSCDDLVHCVWRCQPGCYCPLGKVLSADGAICVKPSYC) enclose the TIL 7 domain. Residue N3235 is glycosylated (N-linked (GlcNAc...) asparagine). TSP type-1 domains lie at 3244-3306 (SGDW…TACP) and 3308-3363 (DGAW…TLCT). 6 disulfide bridges follow: C3256/C3299, C3260/C3305, C3271/C3283, C3320/C3355, C3323/C3362, and C3333/C3345. The N-linked (GlcNAc...) asparagine glycan is linked to N3301. The N-linked (GlcNAc...) asparagine glycan is linked to N3357. In terms of domain architecture, TIL 8 spans 3365 to 3421 (CGGGQDLLPCGQPCPHSCQDLSLGSTCQPGSAGCQSGCGCPPGQLSQDGLCVFPVDC). N3435 and N3462 each carry an N-linked (GlcNAc...) asparagine glycan. Residues 3481–3529 (PGIWSSWGPWEKCSVSCGGGEQLRSRQCARPPCPGLAQQSRICHIHVCR) form the TSP type-1 15 domain. 3 disulfide bridges follow: C3493/C3523, C3497/C3528, and C3508/C3513. An N-linked (GlcNAc...) asparagine glycan is attached at N3638. TSP type-1 domains lie at 3657–3713 (HGSF…PECP), 3727–3779 (AGGW…PSCA), 3793–3849 (NCFW…RACP), and 3851–3906 (PGGW…MPCE). 3 cysteine pairs are disulfide-bonded: C3669-C3707, C3673-C3712, and C3685-C3697. An N-linked (GlcNAc...) asparagine glycan is attached at N3761. 6 disulfide bridges follow: C3794/C3830, C3805/C3809, C3843/C3848, C3863/C3900, C3867/C3905, and C3878/C3890. A TIL 9 domain is found at 3909-3964 (CPAGMEMVSCANHCPYSCSDLQEGGMCQEDQACQLGCRCSEGFLEQDGGCVPVGHC). An N-linked (GlcNAc...) asparagine glycan is attached at N3986. TSP type-1 domains lie at 4006–4059 (HCAW…VPCP), 4100–4155 (PRGW…QLCL), 4157–4213 (KLER…GPCQ), and 4215–4269 (DCTW…GNCS). 12 disulfides stabilise this stretch: C4007/C4043, C4018/C4022, C4053/C4058, C4112/C4149, C4116/C4154, C4127/C4139, C4169/C4207, C4173/C4212, C4184/C4195, C4216/C4253, C4227/C4229, and C4263/C4268. N4196 is a glycosylation site (N-linked (GlcNAc...) asparagine). A glycan (N-linked (GlcNAc...) asparagine) is linked at N4267. The TIL 10 domain maps to 4273-4328 (CPPPFEFQSCGSPCAGLCATHLNHRLCQDLPPCQPGCYCPKGLLEQAGSCILPEQC). N4408 and N4463 each carry an N-linked (GlcNAc...) asparagine glycan. Residues 4465 to 4516 (TCQWGPWGPWSPCQMPCSGGFKLRWRVARDTSAGECPGPWAQTESCNMGSCP) form the TSP type-1 24 domain. 3 disulfide bridges follow: C4466/C4500, C4477/C4481, and C4510/C4515. The TIL 11 domain occupies 4530–4576 (DCANQCPRSCADLWDGVQCLQGPCSPGCRCPPGQLVQDGHCVPISSC). 3 N-linked (GlcNAc...) asparagine glycosylation sites follow: N4584, N4601, and N4606. In terms of domain architecture, TSP type-1 25 spans 4616 to 4669 (CPVLGPWSAWSECSAVCGKGTMVRHRSCEEHPDREPCQALDLQQWQECNLQACP). 3 disulfide bridges follow: C4628–C4663, C4632–C4668, and C4643–C4652. The TIL 12 domain maps to 4671-4725 (CPPGQVLSTCATMCPSLCSHLWPGTICVREPCQLGCGCPGGQLLYNGTCIPPEAC). N-linked (GlcNAc...) asparagine glycans are attached at residues N4716, N4756, N4799, and N4806. One can recognise a TIL 13 domain in the interval 4777-4835 (CAPGEIWQHGKLGPCEKTCPEMNMTQAWSNCTEAQAPGCVCQLGYFRSQTGLCVPEDHC). Residues 4835–4893 (CECWHHGSPHLPGSEWQEACESCRCLHGKSVCIRHCPELSCAQGEVIMQEPGSCCPICQ) form the VWFC 3 domain. 4 disulfides stabilise this stretch: C4892/C4952, C4918/C4969, C4928/C4985, and C4932/C4987. Residues 4892–4991 (CQQDTLKEEP…IHSCQCSACQ (100 aa)) form the CTCK domain. N4912 is a glycosylation site (N-linked (GlcNAc...) asparagine).

Belongs to the thrombospondin family. As to expression, subcommissural organ.

The protein localises to the secreted. Its subcellular location is the extracellular space. Functionally, involved in the modulation of neuronal aggregation. May be involved in developmental events during the formation of the central nervous system. The protein is SCO-spondin of Mus musculus (Mouse).